Here is a 296-residue protein sequence, read N- to C-terminus: Cell surface glycoprotein CD200 receptor 3 (296 aa).

The signal sequence occupies residues 1 to 25; it reads MHALGRTLALMLLIFITILVPESSC. Residues 26-245 are Extracellular-facing; that stretch reads SVKGREEIPP…NRGTTSILPS (220 aa). Positions 48 to 162 constitute an Ig-like V-type domain; the sequence is PDGVGVTMEI…GIFQERHSIQ (115 aa). Cysteines 75 and 146 form a disulfide. The Ig-like C2-type domain maps to 151–232; the sequence is TDGIFQERHS…SHLTDNWILS (82 aa). Residues N167 and N199 are each glycosylated (N-linked (GlcNAc...) asparagine). An intrachain disulfide couples C172 to C220. Residues 246 to 266 form a helical membrane-spanning segment; it reads LLSILYVKLAVTVLIVGFAFF. Residues 267–296 lie on the Cytoplasmic side of the membrane; it reads QKRNYFSSRDLVFMKERRSKRSVWQREALG.

This sequence belongs to the CD200R family. As to quaternary structure, isoform 3 interacts with TYROBP. Isoform 8 does not interact with TYROBP. As to expression, expressed in uterus and bone marrow-derived mast cells (at protein level). Expressed in uterus, spleen, bone marrow-derived dendritic, basophil and mast cells. Expressed in the lung of N.brasiliensis-infected mice. Weakly expressed in brain, testis, lung and thymus.

It localises to the membrane. In terms of biological role, according to PubMed:15187158 isoform 4 is a receptor for the CD200 cell surface glycoprotein. According to PubMed:16081818 isoform 4 is not a receptor for the CD200/OX2 cell surface glycoprotein. Isoform 1, isoform 2 and isoform 3 are involved in the recruitment or surface expression of the TYROBP receptor. Isoform 6, isoform 7 and isoform 8 are not involved in the recruitment or surface expression of the TYROBP receptor. The protein is Cell surface glycoprotein CD200 receptor 3 (Cd200r3) of Mus musculus (Mouse).